The sequence spans 433 residues: Forkhead box protein A2-B (433 aa).

A DNA-binding region (fork-head) is located at residues 147 to 241; the sequence is KPPYSYISLI…ENGCYLRRQK (95 aa). Basic and acidic residues predominate over residues 247 to 260; sequence KKPSLREGGGKKLS. Disordered stretches follow at residues 247-337 and 407-433; these read KKPS…QSHL and SGLE…MNSS. Positions 261–282 are enriched in low complexity; that stretch reads EGASSVGSVGNSSSERSVGNES. Residues 292-302 show a composition bias toward basic and acidic residues; the sequence is EQKRSLVDMKS. Low complexity predominate over residues 315–331; sequence ASQAQHLLSQHHSVLSH. Polar residues predominate over residues 407–421; it reads SGLEPSPISSDTSYY.

The protein resides in the nucleus. Acts as a transcriptional activator during early development, limiting the extent of mesoderm formation in the gastrula. Binds to DNA via the target sequence 5'-GT[AC]AACA-3', with 5'-GTAAACA-3' being the preferred binding site. This is Forkhead box protein A2-B (foxa2-b) from Xenopus laevis (African clawed frog).